Reading from the N-terminus, the 149-residue chain is Large ribosomal subunit protein uL13 (149 aa).

This sequence belongs to the universal ribosomal protein uL13 family. Part of the 50S ribosomal subunit.

In terms of biological role, this protein is one of the early assembly proteins of the 50S ribosomal subunit, although it is not seen to bind rRNA by itself. It is important during the early stages of 50S assembly. The protein is Large ribosomal subunit protein uL13 of Bifidobacterium longum subsp. infantis (strain ATCC 15697 / DSM 20088 / JCM 1222 / NCTC 11817 / S12).